Consider the following 111-residue polypeptide: uncharacterized protein (111 aa).

The segment at 12–34 (AWCPSRPPASAPSAPQEAARRGD) is disordered. Residues 71–76 (PNIIIT) form a required for interaction with PPP3CA region. Residues threonine 79 and threonine 81 each carry the phosphothreonine modification.

In terms of assembly, interacts (via PxIxIT motif, when phosphorylated on Thr-79) with PPP3CA.

This is an uncharacterized protein from Mus musculus (Mouse).